A 288-amino-acid polypeptide reads, in one-letter code: Prohibitin-2 (288 aa).

The helical; Signal-anchor for type II membrane protein transmembrane segment at 21–43 (GKYAFTGTGLLLALGLAGFAVQT) threads the bilayer. Residues 125-128 (YRTL) carry the AIM motif.

This sequence belongs to the prohibitin family. In terms of assembly, the mitochondrial prohibitin complex consists of two subunits (phb1 and phb2). The subunits assemble into a membrane-associated ring-shaped supercomplex of approximately 1 mDa.

It localises to the mitochondrion inner membrane. Functionally, prohibitin probably acts as a holdase/unfoldase for the stabilization of newly synthesized mitochondrial proteins. Involved in mitophagy; may act as an adapter for atg8 that supports mitophagosome assembly. Negatively regulates the proteolytic processing of atg32 via the i-AAA protease. Acts as a negative regulator of the m-AAA protease. This is Prohibitin-2 (phb2) from Schizosaccharomyces pombe (strain 972 / ATCC 24843) (Fission yeast).